The following is a 473-amino-acid chain: Ribulose bisphosphate carboxylase large chain 1 (473 aa).

The substrate site is built by asparagine 116 and threonine 166. The active-site Proton acceptor is lysine 168. Lysine 170 lines the substrate pocket. Mg(2+)-binding residues include lysine 194, aspartate 196, and glutamate 197. Lysine 194 carries the N6-carboxylysine modification. Catalysis depends on histidine 287, which acts as the Proton acceptor. The substrate site is built by arginine 288, histidine 320, and serine 372.

This sequence belongs to the RuBisCO large chain family. Type I subfamily. As to quaternary structure, heterohexadecamer of 8 large chains and 8 small chains. Mg(2+) serves as cofactor.

The catalysed reaction is 2 (2R)-3-phosphoglycerate + 2 H(+) = D-ribulose 1,5-bisphosphate + CO2 + H2O. It carries out the reaction D-ribulose 1,5-bisphosphate + O2 = 2-phosphoglycolate + (2R)-3-phosphoglycerate + 2 H(+). Its function is as follows. RuBisCO catalyzes two reactions: the carboxylation of D-ribulose 1,5-bisphosphate, the primary event in carbon dioxide fixation, as well as the oxidative fragmentation of the pentose substrate. Both reactions occur simultaneously and in competition at the same active site. This is Ribulose bisphosphate carboxylase large chain 1 from Acidithiobacillus ferrooxidans (Thiobacillus ferrooxidans).